Here is a 177-residue protein sequence, read N- to C-terminus: VKSTNLMAFVATKMLERQEDLDTCTEMQVEKMKASTKARLRTESSFAPRTWEDAIKDEILRRSVDTSSLDRWPELKQELENVSDALKADSLWLPMKSLSLYSEVSNQEPSSIPIGEMKHQILTRLKLICSRLEKLDHNLSKAVLGIQNSEDLILIIYNRDICKNTILMIKSLCNSLI.

2 short sequence motifs (nuclear export signal) span residues 91-100 (LWLPMKSLSL) and 117-127 (MKHQILTRLKL).

In terms of assembly, binds M1 protein. May interact with human nucleoporins and exportin XPO1/CRM1.

It localises to the virion. The protein localises to the host nucleus. In terms of biological role, mediates the nuclear export of encapsidated genomic RNAs (ribonucleoproteins, RNPs). Acts as an adapter between viral RNPs complexes and the nuclear export machinery of the cell. Possesses no intrinsic RNA-binding activity, but includes a C-terminal M1-binding domain. This domain is believed to allow recognition of RNPs to which the M1 protein is bound. Because the M1 protein is not available in large quantities until the later stages of infection, such an indirect recognition mechanism probably ensures that genomic RNPs are not exported from the nucleus before sufficient quantities of viral mRNA and progeny genomic RNA have been synthesized. Furthermore, the RNPs enters the cytoplasm only when they have associated with the M1 protein that is necessary to guide them to the plasma membrane. May down-regulate viral RNA synthesis when overproduced. This Homo sapiens (Human) protein is Nuclear export protein (NS).